The primary structure comprises 592 residues: Inactive metallocarboxypeptidase ECM14 (592 aa).

A signal peptide spans 1–21 (MRQFTHGTLLAILALANTISA). The propeptide occupies 22-174 (IPSFSANNYP…QTVYESYPSS (153 aa)). The segment covering 170–179 (SYPSSSQRPT) has biased composition (polar residues). The disordered stretch occupies residues 170–191 (SYPSSSQRPTDNGRGFLPSRES). Residues 202-521 (DYQPLSVIGP…NAVMVLAKFL (320 aa)) enclose the Peptidase M14 domain. 2 residues coordinate Zn(2+): histidine 264 and glutamate 267. Substrate-binding positions include 264–267 (HARE), arginine 322, and 339–340 (DR). Cysteine 333 and cysteine 356 are joined by a disulfide. N-linked (GlcNAc...) asparagine glycosylation is present at asparagine 349. Histidine 396 lines the Zn(2+) pocket. 397–398 (SY) is a binding site for substrate. The segment at 542–592 (ADKPILDDGDDDEEEDGQDKKDDSWIPDEYKNDNDHDDDDDGWGLRRRRKR) is disordered. Residues 548 to 558 (DDGDDDEEEDG) show a composition bias toward acidic residues. Residues 559–575 (QDKKDDSWIPDEYKNDN) are compositionally biased toward basic and acidic residues.

Belongs to the peptidase M14 family. Zn(2+) is required as a cofactor.

The protein resides in the vacuole. It localises to the secreted. Inactive carboxypeptidase that may play a role in cell wall organization and biogenesis. The chain is Inactive metallocarboxypeptidase ECM14 (ECM14) from Ajellomyces dermatitidis (strain ER-3 / ATCC MYA-2586) (Blastomyces dermatitidis).